The primary structure comprises 111 residues: uncharacterized protein (111 aa).

A run of 2 helical transmembrane segments spans residues 18-38 and 42-62; these read LNVF…LFVS and LALA…RTFP.

The protein localises to the membrane. This is an uncharacterized protein from Saccharomyces cerevisiae (strain ATCC 204508 / S288c) (Baker's yeast).